A 350-amino-acid polypeptide reads, in one-letter code: Phosphatidylinositol transfer protein PDR17 (350 aa).

The CRAL-TRIO domain maps to 139-297 (KVAVENETGK…LYNGLLDFKY (159 aa)).

In terms of assembly, interacts with phosphatidylserine decarboxylase PSD2. Also interacts with PBI1.

The protein resides in the cytoplasm. Its subcellular location is the microsome. It catalyses the reaction a 1,2-diacyl-sn-glycero-3-phospho-(1D-myo-inositol)(in) = a 1,2-diacyl-sn-glycero-3-phospho-(1D-myo-inositol)(out). In terms of biological role, has phosphatidylinositol transfer activity. Involved in the regulation of the phospholipid composition of plasma- and endomembranes. Altering plasma membrane composition may provide a possible mechanism for multidrug resistance. Contributes to efficient phospholipase D1 activation and phospholipase B1 inhibition in the regulation of phospholipid turnover. Forms a complex with phosphatidylserine decarboxylase PSD2 that seems essential for maintenance of vacuolar phosphatidylethanolamine (PE) levels. Allows interorganelle phosphatidylserine (PtdSer) transport via a process that involves the acceptor membrane complex PDR17-PDS2 that binds to PBI1 which in turn ligates to SCS2 and phosphatidic acid present in the donor membrane, forming a zone of apposition that facilitates PtdSer transfer. The chain is Phosphatidylinositol transfer protein PDR17 from Saccharomyces cerevisiae (strain ATCC 204508 / S288c) (Baker's yeast).